The chain runs to 130 residues: Transcription antitermination protein NusB (130 aa).

It belongs to the NusB family.

Involved in transcription antitermination. Required for transcription of ribosomal RNA (rRNA) genes. Binds specifically to the boxA antiterminator sequence of the ribosomal RNA (rrn) operons. The chain is Transcription antitermination protein NusB from Bacillus cereus (strain B4264).